Here is a 158-residue protein sequence, read N- to C-terminus: 6,7-dimethyl-8-ribityllumazine synthase (158 aa).

5-amino-6-(D-ribitylamino)uracil-binding positions include Phe-22, 57 to 59 (AYE), and 84 to 86 (TVI). Residue 89 to 90 (GT) participates in (2S)-2-hydroxy-3-oxobutyl phosphate binding. His-92 acts as the Proton donor in catalysis. Phe-117 is a binding site for 5-amino-6-(D-ribitylamino)uracil. Residue Arg-131 participates in (2S)-2-hydroxy-3-oxobutyl phosphate binding.

The protein belongs to the DMRL synthase family. In terms of assembly, forms an icosahedral capsid composed of 60 subunits, arranged as a dodecamer of pentamers.

The catalysed reaction is (2S)-2-hydroxy-3-oxobutyl phosphate + 5-amino-6-(D-ribitylamino)uracil = 6,7-dimethyl-8-(1-D-ribityl)lumazine + phosphate + 2 H2O + H(+). Its pathway is cofactor biosynthesis; riboflavin biosynthesis; riboflavin from 2-hydroxy-3-oxobutyl phosphate and 5-amino-6-(D-ribitylamino)uracil: step 1/2. Its function is as follows. Catalyzes the formation of 6,7-dimethyl-8-ribityllumazine by condensation of 5-amino-6-(D-ribitylamino)uracil with 3,4-dihydroxy-2-butanone 4-phosphate. This is the penultimate step in the biosynthesis of riboflavin. The sequence is that of 6,7-dimethyl-8-ribityllumazine synthase from Pectobacterium carotovorum subsp. carotovorum (strain PC1).